The chain runs to 279 residues: Biotin synthase (279 aa).

The 227-residue stretch at 2–228 (KTIMLCAICS…ETRVMIAGGR (227 aa)) folds into the Radical SAM core domain. Positions 17, 21, and 24 each coordinate [4Fe-4S] cluster. Residues Cys-61, Cys-96, Cys-154, and Arg-221 each coordinate [2Fe-2S] cluster.

This sequence belongs to the radical SAM superfamily. Biotin synthase family. Homodimer. [4Fe-4S] cluster is required as a cofactor. The cofactor is [2Fe-2S] cluster.

The catalysed reaction is (4R,5S)-dethiobiotin + (sulfur carrier)-SH + 2 reduced [2Fe-2S]-[ferredoxin] + 2 S-adenosyl-L-methionine = (sulfur carrier)-H + biotin + 2 5'-deoxyadenosine + 2 L-methionine + 2 oxidized [2Fe-2S]-[ferredoxin]. It participates in cofactor biosynthesis; biotin biosynthesis; biotin from 7,8-diaminononanoate: step 2/2. Its function is as follows. Catalyzes the conversion of dethiobiotin (DTB) to biotin by the insertion of a sulfur atom into dethiobiotin via a radical-based mechanism. The chain is Biotin synthase from Campylobacter concisus (strain 13826).